The primary structure comprises 484 residues: MLHQLTLAEIARALADKQFSAEELTRTLLGRIRQLDPQLNSFISITDDLAIAQAKAADERRANGENGALLGAPIAHKDLFCTQGVRTSCGSKMLDNFVSPYDATVVEKLTAAGAVTLGKLNMDEFAMGSSNQSSHYGAVKNPWSLDRVPGGSSGGSAAAVAARLLPAATGTDTGGSIRQPAALTNLTGIKPTYGRVSRWGMIAYASSLDQGGPLARTAEDCALMLGVMAGFDPKDSTSVEQPVDDYLAALQKPLSGLRIGLPREYFGAGLDSRIADAVLAVVEELKTLGATVKDISLPNMQHAIPAYYVIAPAEASSNLSRFDGVRYGYRCDAPQNLEDLYKRSRAEGFGSEVKNRIMVGTYALSAGYYDAYYLQAQKIRRLIKNDFVSAFAEVDVILGPTTPNPAWKIGEKNDDPVSQYLEDIYTITANLAGLPGLSMPAGFVDGLPVGVQLLAPYFQEGRLLNVAHQYQQVSDWHTRTPAGF.

Residues Lys77 and Ser152 each act as charge relay system in the active site. The active-site Acyl-ester intermediate is Ser176.

Belongs to the amidase family. GatA subfamily. In terms of assembly, heterotrimer of A, B and C subunits.

It carries out the reaction L-glutamyl-tRNA(Gln) + L-glutamine + ATP + H2O = L-glutaminyl-tRNA(Gln) + L-glutamate + ADP + phosphate + H(+). In terms of biological role, allows the formation of correctly charged Gln-tRNA(Gln) through the transamidation of misacylated Glu-tRNA(Gln) in organisms which lack glutaminyl-tRNA synthetase. The reaction takes place in the presence of glutamine and ATP through an activated gamma-phospho-Glu-tRNA(Gln). The protein is Glutamyl-tRNA(Gln) amidotransferase subunit A of Pseudomonas aeruginosa (strain ATCC 15692 / DSM 22644 / CIP 104116 / JCM 14847 / LMG 12228 / 1C / PRS 101 / PAO1).